The chain runs to 226 residues: Lysoplasmalogenase TMEM86B (226 aa).

Over 1–23 (MDPGKEGLPRKPRFSAQQLHVGK) the chain is Cytoplasmic. The helical transmembrane segment at 24-40 (WLSPFFFTCAVYFLLWI) threads the bilayer. Over 41–46 (PDDQPS) the chain is Extracellular. A helical transmembrane segment spans residues 47–64 (WVGALVKCLPVLSLVVFL). Over 65–76 (RAVDAGGGYSAR) the chain is Cytoplasmic. A helical membrane pass occupies residues 77–93 (LQGALLCSAVGDACLVW). At 94–99 (PEAFLH) the chain is on the extracellular side. A helical transmembrane segment spans residues 100-117 (GVAAFAAAHLLYLWAFGL). At 118–123 (TPLQPG) the chain is on the cytoplasmic side. A helical membrane pass occupies residues 124 to 140 (LLLLVILAALPYYGLLL). Over 141-146 (WHLPPD) the chain is Extracellular. The chain crosses the membrane as a helical span at residues 147-163 (LVLALTAYSLALATMLW). The Cytoplasmic portion of the chain corresponds to 164–171 (RGLARGGS). A helical transmembrane segment spans residues 172–188 (TGWGALLFTLSDTTLAW). Topologically, residues 189–199 (NAFAQPLPHAR) are extracellular. Residues 200-217 (LVVMTTYYSAQVLISLSV) form a helical membrane-spanning segment. At 218–226 (SQSPKLKPN) the chain is on the cytoplasmic side.

Belongs to the TMEM86 family. As to quaternary structure, homodimer.

The protein localises to the endoplasmic reticulum membrane. Its subcellular location is the cytoplasm. It carries out the reaction a 1-O-(1Z-alkenyl)-sn-glycero-3-phosphocholine + H2O = a 2,3-saturated aldehyde + sn-glycerol 3-phosphocholine. The enzyme catalyses a 1-O-(1Z-alkenyl)-sn-glycero-3-phosphoethanolamine + H2O = a 2,3-saturated aldehyde + sn-glycero-3-phosphoethanolamine. With respect to regulation, competitively inhibited by lysophosphatidic acid. Catalyzes the hydrolysis of the vinyl ether bond of choline or ethanolamine lysoplasmalogens, forming fatty aldehyde and glycerophosphocholine or glycerophosphoethanolamine, respectively and is specific for the sn-2-deacylated (lyso) form of plasmalogen. This chain is Lysoplasmalogenase TMEM86B (TMEM86B), found in Sus scrofa (Pig).